Consider the following 314-residue polypeptide: GTP cyclohydrolase FolE2 (314 aa).

The tract at residues 290–314 is disordered; the sequence is DASAWSAPQAAAPDQQESFATGNER. The segment covering 291-304 has biased composition (low complexity); that stretch reads ASAWSAPQAAAPDQ. Positions 305-314 are enriched in polar residues; sequence QESFATGNER.

Belongs to the GTP cyclohydrolase IV family.

It carries out the reaction GTP + H2O = 7,8-dihydroneopterin 3'-triphosphate + formate + H(+). It functions in the pathway cofactor biosynthesis; 7,8-dihydroneopterin triphosphate biosynthesis; 7,8-dihydroneopterin triphosphate from GTP: step 1/1. In terms of biological role, converts GTP to 7,8-dihydroneopterin triphosphate. The protein is GTP cyclohydrolase FolE2 of Pseudomonas putida (strain ATCC 47054 / DSM 6125 / CFBP 8728 / NCIMB 11950 / KT2440).